The primary structure comprises 2349 residues: Reducing polyketide synthase AFT16-1 (2349 aa).

A compositionally biased stretch (basic and acidic residues) spans 1–14 (MNGKSRDNGHDGKR). 2 disordered regions span residues 1–21 (MNGK…VPAE) and 37–80 (TNPS…TSNS). A Ketosynthase family 3 (KS3) domain is found at 20–462 (AEPIAIVGTA…GTNAHTILES (443 aa)). Catalysis depends on for beta-ketoacyl synthase activity residues C194, H333, and H382. The segment at 578–888 (VFTGQGAQWP…LLYKGVLERF (311 aa)) is malonyl-CoA:ACP transacylase (MAT) domain. The segment at 958-1092 (HPLLGFRSVD…GDILLSHFAK (135 aa)) is N-terminal hotdog fold. The tract at residues 958–1263 (HPLLGFRSVD…QVEGLKFSCM (306 aa)) is dehydratase (DH) domain. Residues 958 to 1269 (HPLLGFRSVD…FSCMYPAQET (312 aa)) form the PKS/mFAS DH domain. Catalysis depends on H990, which acts as the Proton acceptor; for dehydratase activity. Residues 1111–1269 (MSSVEPSLFY…FSCMYPAQET (159 aa)) are C-terminal hotdog fold. The Proton donor; for dehydratase activity role is filled by D1170. Residues 1976 to 2164 (SPNKTYLLVG…VVGVGYVARA (189 aa)) are ketoreductase (KR) domain. Residues 2273-2347 (EILSGSLKQK…GLCLEAIGQW (75 aa)) form the Carrier domain. S2307 bears the O-(pantetheine 4'-phosphoryl)serine mark.

Its pathway is mycotoxin biosynthesis. Its function is as follows. Reducing polyketide synthase; part of the gene clusters that mediate the biosynthesis of the host-selective toxins (HSTs) AF-toxins responsible for Alternaria black spot of strawberry disease by the strawberry pathotype. AF-toxin I and III are valine derivatives of 2,3-dyhydroxy-isovaleric acid and 2-hydroxy-isovaleric acid respectively, while AF II is an isoleucine derivative of 2-hydroxy-valeric acid. These derivatives are bound to a 9,10-epoxy-8-hydroxy-9-methyl-decatrienoic acid (EDA) moiety. On cellular level, AF-toxins affect plasma membrane of susceptible cells and cause a sudden increase in loss of K(+) after a few minutes of toxin treatment. The aldo-keto reductase AFTS1 catalyzes the conversion of 2-keto-isovaleric acid (2-KIV) to 2-hydroxy-isovaleric acid (2-HIV) by reduction of its ketone to an alcohol. The acyl-CoA ligase AFT1, the hydrolase AFT2 and the enoyl-CoA hydratases AFT3 and AFT6, but also the polyketide synthase AFT9, the acyl-CoA dehydrogenase AFT10, the cytochrome P450 monooxygenase AFT11 and the oxidoreductase AFT12 are all involved in the biosynthesis of the AK-, AF- and ACT-toxin common EDA structural moiety. The exact function of each enzyme, and of additional enzymes identified within the AF-toxin clusters have still to be determined. This is Reducing polyketide synthase AFT16-1 from Alternaria alternata (Alternaria rot fungus).